Reading from the N-terminus, the 473-residue chain is ATP synthase subunit beta (473 aa).

153–160 (GGAGVGKT) serves as a coordination point for ATP.

The protein belongs to the ATPase alpha/beta chains family. As to quaternary structure, F-type ATPases have 2 components, CF(1) - the catalytic core - and CF(0) - the membrane proton channel. CF(1) has five subunits: alpha(3), beta(3), gamma(1), delta(1), epsilon(1). CF(0) has three main subunits: a(1), b(2) and c(9-12). The alpha and beta chains form an alternating ring which encloses part of the gamma chain. CF(1) is attached to CF(0) by a central stalk formed by the gamma and epsilon chains, while a peripheral stalk is formed by the delta and b chains.

The protein localises to the cell membrane. The enzyme catalyses ATP + H2O + 4 H(+)(in) = ADP + phosphate + 5 H(+)(out). In terms of biological role, produces ATP from ADP in the presence of a proton gradient across the membrane. The catalytic sites are hosted primarily by the beta subunits. This Rickettsia africae (strain ESF-5) protein is ATP synthase subunit beta.